Consider the following 117-residue polypeptide: Immunoglobulin kappa variable 1-9 (117 aa).

Residues 1–22 (MDMRVPAQLLGLLLLWLPGARC) form the signal peptide. The interval 23 to 45 (DIQLTQSPSFLSASVGDRVTITC) is framework-1. Residues 24-117 (IQLTQSPSFL…YYCQQLNSYP (94 aa)) enclose the Ig-like domain. C45 and C110 form a disulfide bridge. Residues 46–56 (RASQGISSYLA) form a complementarity-determining-1 region. The interval 57-71 (WYQQKPGKAPKLLIY) is framework-2. Residues 72-78 (AASTLQS) form a complementarity-determining-2 region. Positions 79–110 (GVPSRFSGSGSGTEFTLTISSLQPEDFATYYC) are framework-3. The tract at residues 111–117 (QQLNSYP) is complementarity-determining-3.

As to quaternary structure, immunoglobulins are composed of two identical heavy chains and two identical light chains; disulfide-linked.

It is found in the secreted. The protein resides in the cell membrane. Functionally, v region of the variable domain of immunoglobulin light chains that participates in the antigen recognition. Immunoglobulins, also known as antibodies, are membrane-bound or secreted glycoproteins produced by B lymphocytes. In the recognition phase of humoral immunity, the membrane-bound immunoglobulins serve as receptors which, upon binding of a specific antigen, trigger the clonal expansion and differentiation of B lymphocytes into immunoglobulins-secreting plasma cells. Secreted immunoglobulins mediate the effector phase of humoral immunity, which results in the elimination of bound antigens. The antigen binding site is formed by the variable domain of one heavy chain, together with that of its associated light chain. Thus, each immunoglobulin has two antigen binding sites with remarkable affinity for a particular antigen. The variable domains are assembled by a process called V-(D)-J rearrangement and can then be subjected to somatic hypermutations which, after exposure to antigen and selection, allow affinity maturation for a particular antigen. The protein is Immunoglobulin kappa variable 1-9 of Homo sapiens (Human).